A 394-amino-acid polypeptide reads, in one-letter code: Phosphoglycerate kinase (394 aa).

Substrate is bound by residues 21–23, 59–62, arginine 117, and arginine 150; these read DLN and HLGR. ATP is bound by residues lysine 201, glutamate 318, and 344–347; that span reads GGDT.

This sequence belongs to the phosphoglycerate kinase family. Monomer.

The protein localises to the cytoplasm. The catalysed reaction is (2R)-3-phosphoglycerate + ATP = (2R)-3-phospho-glyceroyl phosphate + ADP. It functions in the pathway carbohydrate degradation; glycolysis; pyruvate from D-glyceraldehyde 3-phosphate: step 2/5. This Blochmanniella pennsylvanica (strain BPEN) protein is Phosphoglycerate kinase.